The following is a 217-amino-acid chain: Uridylate kinase (217 aa).

5 to 9 is a binding site for ATP; it reads KLTGR. Gly37 contacts UMP. ATP contacts are provided by Gly38 and Arg42. UMP is bound by residues Asp59 and 107-113; that span reads FQPGQST. Asn134, Tyr139, and Asp142 together coordinate ATP.

This sequence belongs to the UMP kinase family. As to quaternary structure, homohexamer.

It localises to the cytoplasm. The catalysed reaction is UMP + ATP = UDP + ADP. It participates in pyrimidine metabolism; CTP biosynthesis via de novo pathway; UDP from UMP (UMPK route): step 1/1. Inhibited by UTP. Its function is as follows. Catalyzes the reversible phosphorylation of UMP to UDP. This is Uridylate kinase from Pyrobaculum calidifontis (strain DSM 21063 / JCM 11548 / VA1).